A 537-amino-acid polypeptide reads, in one-letter code: Sodium/hydrogen exchanger 9B2 (537 aa).

A compositionally biased stretch (basic and acidic residues) spans 1 to 10 (MGDEDKRITY). The segment at 1 to 33 (MGDEDKRITYEDSEPSTGMNYTPSMHQETQEET) is disordered. The Cytoplasmic portion of the chain corresponds to 1–86 (MGDEDKRITY…ACPPHGLLDR (86 aa)). Residues 15–27 (PSTGMNYTPSMHQ) show a composition bias toward polar residues. Ser49 carries the post-translational modification Phosphoserine. A helical membrane pass occupies residues 87–104 (VVTNVTIIVLLWAVIWSI). Residues 105 to 113 (TGSECLPGG) are Extracellular-facing. Residues 114-133 (NLFGIIILFYCAIIGGKLLG) traverse the membrane as a helical segment. Residues 134-144 (LIKLPTLPPLP) lie on the Cytoplasmic side of the membrane. The helical transmembrane segment at 145 to 161 (SLLGMLLAGFLIRNIPV) threads the bilayer. The Extracellular portion of the chain corresponds to 162–171 (INDNVQIKHK). The chain crosses the membrane as a helical span at residues 172–189 (WSSSLRSIALSIILVRAG). The Cytoplasmic portion of the chain corresponds to 190 to 200 (LGLDSKALKKL). Residues 201–227 (KGVCVRLSMGPCIVEACTSALLAHYLL) traverse the membrane as a helical segment. At 228-233 (GLPWQW) the chain is on the extracellular side. Residues 234–242 (GFILGFVLG) form a helical membrane-spanning segment. Residues 243–270 (AVSPAVVVPSMLLLQGGGYGVEKGVPTL) are Cytoplasmic-facing. 4 residues coordinate Na(+): Val244, Gly275, Asp278, and Asp279. A helical transmembrane segment spans residues 271–290 (LMAAGSFDDILAITGFNTCL). The Extracellular segment spans residues 291 to 300 (GIAFSTGSTV). A helical transmembrane segment spans residues 301–324 (FNVLRGVLEVVIGVATGSVLGFFI). Over 325–339 (QYFPSCDQDKLVCKR) the chain is Cytoplasmic. The chain crosses the membrane as a helical span at residues 340 to 357 (TFLVLGLSVLAVFSSVHF). Residues 358–361 (GFPG) lie on the Extracellular side of the membrane. The chain crosses the membrane as a helical span at residues 362–373 (SGGLCTLVMAFL). The Cytoplasmic portion of the chain corresponds to 374-390 (AGMGWTSEKAEVEKIIA). Residues 391–411 (VAWDIFQPLLFGLIGAEVSIA) traverse the membrane as a helical segment. Residues 412–417 (SLRPET) are Extracellular-facing. A helical membrane pass occupies residues 418 to 440 (VGLCVATVGIAVLIRILTTFLMV). The Cytoplasmic portion of the chain corresponds to 441-461 (CFAGFNLKEKIFISFAWLPKA). Residues 462–473 (TVQAAIGSVALD) traverse the membrane as a helical segment. Topologically, residues 474–486 (TARSHGEKQLEDY) are extracellular. A helical transmembrane segment spans residues 487–509 (GMDVLTVAFLSILITAPIGSLLI). Residues 510–537 (GLLGPRLLQKVEHQNKDEEVQGETSVQV) are Cytoplasmic-facing.

Belongs to the monovalent cation:proton antiporter 1 (CPA1) transporter (TC 2.A.36) family. In terms of assembly, homodimer; dimerization is essential for SLC9B2 activity. Lipids seem to play a role in the stabilization of the dimerization subdomain.

Its subcellular location is the cell membrane. It localises to the mitochondrion membrane. The protein resides in the endosome membrane. The protein localises to the recycling endosome membrane. It is found in the cytoplasmic vesicle. Its subcellular location is the secretory vesicle. It localises to the synaptic vesicle membrane. The protein resides in the basolateral cell membrane. The protein localises to the apical cell membrane. It carries out the reaction Li(+)(out) + H(+)(in) = Li(+)(in) + H(+)(out). It catalyses the reaction Li(+)(in) + Na(+)(out) = Li(+)(out) + Na(+)(in). The enzyme catalyses Na(+)(in) + H(+)(out) = Na(+)(out) + H(+)(in). With respect to regulation, allosterically inhibited by the N-terminal domain. Inhibited by phloretin. Functionally, electroneutral Na(+) Li(+)/H(+) antiporter that extrudes Na(+) or Li(+) in exchange for external protons across the membrane. Uses the proton gradient/membrane potential to extrude sodium. Contributes to the regulation of intracellular pH and sodium homeostasis. Also able to mediate Na(+)/Li(+) antiporter activity in kidney. May play a physiological role in renal tubular function and blood pressure homeostasis. Plays an important role for insulin secretion and clathrin-mediated endocytosis in beta-cells. Involved in sperm motility and fertility. It is controversial whether SLC9B2 plays a role in osteoclast differentiation or not. This is Sodium/hydrogen exchanger 9B2 (SLC9B2) from Pongo abelii (Sumatran orangutan).